The primary structure comprises 373 residues: Homoserine O-acetyltransferase (373 aa).

The AB hydrolase-1 domain maps to 52-356 (NVVMVLHALT…VYGHDGFLVE (305 aa)). Ser157 serves as the catalytic Nucleophile. Arg227 contacts substrate. Residues Asp320 and His350 contribute to the active site. Asp351 is a substrate binding site.

It belongs to the AB hydrolase superfamily. MetX family. As to quaternary structure, homodimer.

The protein resides in the cytoplasm. It carries out the reaction L-homoserine + acetyl-CoA = O-acetyl-L-homoserine + CoA. It functions in the pathway amino-acid biosynthesis; L-methionine biosynthesis via de novo pathway; O-acetyl-L-homoserine from L-homoserine: step 1/1. Functionally, transfers an acetyl group from acetyl-CoA to L-homoserine, forming acetyl-L-homoserine. The polypeptide is Homoserine O-acetyltransferase (Mycobacterium sp. (strain KMS)).